We begin with the raw amino-acid sequence, 172 residues long: Single-stranded DNA-binding protein 2 (172 aa).

In terms of domain architecture, SSB spans 6-111; sequence VNKVILVGHI…VIVNVGGTMQ (106 aa). The DNA-binding element occupies 55-61; that stretch reads WHRVVVF. The disordered stretch occupies residues 113–172; that stretch reads LGRHNSQPQQEPQTPPTAAKGEGKAVKGAGNAAKGKNAAAPQQPPAQPDPAYDFDDDIPF. The segment covering 119-153 has biased composition (low complexity); the sequence is QPQQEPQTPPTAAKGEGKAVKGAGNAAKGKNAAAP. Positions 167–172 match the Important for interaction with partner proteins motif; sequence DDDIPF.

Homotetramer.

Its function is as follows. Plays an important role in DNA replication, recombination and repair. Binds to ssDNA and to an array of partner proteins to recruit them to their sites of action during DNA metabolism. This is Single-stranded DNA-binding protein 2 (ssb2) from Salmonella typhimurium (strain LT2 / SGSC1412 / ATCC 700720).